The chain runs to 387 residues: Galactokinase (387 aa).

Position 33 to 36 (33 to 36 (EHID)) interacts with substrate. ATP is bound by residues Ser67 and 124-130 (GAGLSSS). Mg(2+)-binding residues include Ser130 and Glu162. The Proton acceptor role is filled by Asp174. Substrate is bound at residue Tyr224.

It belongs to the GHMP kinase family. GalK subfamily.

The protein resides in the cytoplasm. The enzyme catalyses alpha-D-galactose + ATP = alpha-D-galactose 1-phosphate + ADP + H(+). It participates in carbohydrate metabolism; galactose metabolism. Functionally, catalyzes the transfer of the gamma-phosphate of ATP to D-galactose to form alpha-D-galactose-1-phosphate (Gal-1-P). In Clostridium perfringens (strain SM101 / Type A), this protein is Galactokinase.